The sequence spans 236 residues: Small ribosomal subunit protein uS5 (236 aa).

An S5 DRBM domain is found at 61-124; the sequence is ENQEIIDIAL…NYAKLNIIEI (64 aa).

It belongs to the universal ribosomal protein uS5 family. Part of the 30S ribosomal subunit. Contacts protein S4.

In terms of biological role, with S4 and S12 plays an important role in translational accuracy. This chain is Small ribosomal subunit protein uS5, found in Pyrococcus horikoshii (strain ATCC 700860 / DSM 12428 / JCM 9974 / NBRC 100139 / OT-3).